Reading from the N-terminus, the 756-residue chain is U3 small nucleolar RNA-associated protein 14 homolog B (756 aa).

Residues 21–44 are disordered; the sequence is DLPENYPLSTSEDEGDSDGEGKRQ. A phosphoserine mark is found at serine 29, serine 31, and serine 37. Coiled coils occupy residues 215-244 and 316-345; these read SLEE…RREK and PEAR…SEEE. 2 stretches are compositionally biased toward basic and acidic residues: residues 419–428 and 452–468; these read KERSFQERVD and LNKE…SSEE. Disordered stretches follow at residues 419-468 and 497-539; these read KERS…SSEE and QQGE…KKKK. A coiled-coil region spans residues 449–476; the sequence is LQKLNKESHQSDNQKVSSEENVLHIQRE. Phosphoserine is present on serine 554.

This sequence belongs to the UTP14 family. Expressed predominantly in germ cells of the testis; weakly expressed in brain.

It is found in the nucleus. The protein localises to the nucleolus. In terms of biological role, essential for spermatogenesis. May be required specifically for ribosome biogenesis and hence protein synthesis during male meiosis. The protein is U3 small nucleolar RNA-associated protein 14 homolog B (Utp14b) of Mus musculus (Mouse).